The chain runs to 359 residues: MNELVQILKNTRQHLMTGVSHMIPFVVSGGILLAVSVMLYGKGAVPDAVADPNLKKLFDIGVAGLTLMVPFLAAYIGYSIAERSALAPCAIGAWVGNSFGAGFFGALIAGIIGGIVVHYLKKIPVHKVLRSVMPIFIIPIVGTLITAGIMMWGLGEPVGALTNSLTQWLQGMQQGSIVMLAVIMGLMLAFDMGGPVNKVAYAFMLICVAQGVYTVVAIAAVGICIPPLGMGLATLIGRKNFSAEERETGKAALVMGCVGVTEGAIPFAAADPLRVIPSIMVGSVCGAVTAALVGAQCYAGWGGLIVLPVVEGKLGYIAAVAVGAVVTAVCVNVLKSLARKNGSSTDEKEDDLDLDFEIN.

In terms of domain architecture, PTS EIIC type-2 spans 11–344; sequence TRQHLMTGVS…KSLARKNGSS (334 aa). Transmembrane regions (helical) follow at residues 19-39, 60-80, 99-119, 135-155, 176-196, 216-236, 251-271, 290-310, and 314-334; these read VSHMIPFVVSGGILLAVSVML, IGVAGLTLMVPFLAAYIGYSI, FGAGFFGALIAGIIGGIVVHY, IFIIPIVGTLITAGIMMWGLG, SIVMLAVIMGLMLAFDMGGPV, VAIAAVGICIPPLGMGLATLI, AALVMGCVGVTEGAIPFAAAD, AALVGAQCYAGWGGLIVLPVV, and LGYIAAVAVGAVVTAVCVNVL.

The protein localises to the cell inner membrane. Functionally, the phosphoenolpyruvate-dependent sugar phosphotransferase system (PTS), a major carbohydrate active -transport system, catalyzes the phosphorylation of incoming sugar substrates concomitant with their translocation across the cell membrane. The protein is Fructose-like permease IIC component 2 (frwC) of Escherichia coli (strain K12).